Reading from the N-terminus, the 158-residue chain is Cyclic pyranopterin monophosphate synthase (158 aa).

Substrate contacts are provided by residues Met-74 to His-76 and Met-112 to Glu-113. The active site involves Asp-127.

This sequence belongs to the MoaC family. As to quaternary structure, homohexamer; trimer of dimers.

It catalyses the reaction (8S)-3',8-cyclo-7,8-dihydroguanosine 5'-triphosphate = cyclic pyranopterin phosphate + diphosphate. The protein operates within cofactor biosynthesis; molybdopterin biosynthesis. Its function is as follows. Catalyzes the conversion of (8S)-3',8-cyclo-7,8-dihydroguanosine 5'-triphosphate to cyclic pyranopterin monophosphate (cPMP). The chain is Cyclic pyranopterin monophosphate synthase from Thermoanaerobacter sp. (strain X514).